The sequence spans 304 residues: MLPPPRPAAALALPVLLLLLVVLTPPPTGARPSPGPDYLRRGWMRLLAEGEGCAPCRPEECAAPRGCLAGRVRDACGCCWECANLEGQLCDLDPSAHFYGHCGEQLECRLDTGGDLSRGEVPEPLCACRSQSPLCGSDGHTYSQICRLQEAARARPDANLTVAHPGPCESGPQIVSHPYDTWNVTGQDVIFGCEVFAYPMASIEWRKDGLDIQLPGDDPHISVQFRGGPQRFEVTGWLQIQAVRPSDEGTYRCLGRNALGQVEAPASLTVLTPDQLNSTGIPQLRSLNLVPEEEAESEENDDYY.

The first 30 residues, 1–30 (MLPPPRPAAALALPVLLLLLVVLTPPPTGA), serve as a signal peptide directing secretion. The 81-residue stretch at 49-129 (EGEGCAPCRP…EVPEPLCACR (81 aa)) folds into the IGFBP N-terminal domain. Disulfide bonds link Cys53–Cys76, Cys56–Cys78, Cys61–Cys79, Cys67–Cys82, Cys90–Cys108, Cys102–Cys126, and Cys135–Cys168. Residues 120–170 (EVPEPLCACRSQSPLCGSDGHTYSQICRLQEAARARPDANLTVAHPGPCES) form the Kazal-like domain. Residues Asn159 and Asn183 are each glycosylated (N-linked (GlcNAc...) asparagine). Residues 172–269 (PQIVSHPYDT…GQVEAPASLT (98 aa)) form the Ig-like C2-type domain. Cysteines 193 and 253 form a disulfide. Asn277 is a glycosylation site (N-linked (GlcNAc...) asparagine).

Its subcellular location is the secreted. It localises to the extracellular space. The protein localises to the extracellular matrix. Involved in the proliferation of osteoblasts during bone formation and bone regeneration. Promotes matrix assembly. This chain is Kazal-type serine protease inhibitor domain-containing protein 1 (KAZALD1), found in Homo sapiens (Human).